Here is a 414-residue protein sequence, read N- to C-terminus: Deoxyuridine 5'-triphosphate nucleotidohydrolase (414 aa).

Substrate-binding positions include 327–329 and 409–410; these read RSS and FG.

It belongs to the dUTPase family. It depends on Mg(2+) as a cofactor.

The enzyme catalyses dUTP + H2O = dUMP + diphosphate + H(+). Its function is as follows. Involved in nucleotide metabolism: produces dUMP, the immediate precursor of thymidine nucleotides and decreases the intracellular concentration of dUTP to avoid uracil incorporation into viral DNA. The chain is Deoxyuridine 5'-triphosphate nucleotidohydrolase from Amazona oratrix (yellow-headed parrot).